The following is a 210-amino-acid chain: Probable nicotinate-nucleotide adenylyltransferase (210 aa).

It belongs to the NadD family.

The catalysed reaction is nicotinate beta-D-ribonucleotide + ATP + H(+) = deamido-NAD(+) + diphosphate. Its pathway is cofactor biosynthesis; NAD(+) biosynthesis; deamido-NAD(+) from nicotinate D-ribonucleotide: step 1/1. Functionally, catalyzes the reversible adenylation of nicotinate mononucleotide (NaMN) to nicotinic acid adenine dinucleotide (NaAD). The sequence is that of Probable nicotinate-nucleotide adenylyltransferase from Streptococcus pyogenes serotype M3 (strain ATCC BAA-595 / MGAS315).